A 332-amino-acid chain; its full sequence is Ketol-acid reductoisomerase (NADP(+)) (332 aa).

The region spanning 2-182 (AKVYIDKDAS…GATRAGVIET (181 aa)) is the KARI N-terminal Rossmann domain. Residues 25-28 (YGSQ), S53, and 83-86 (DMVQ) contribute to the NADP(+) site. The active site involves H108. Residue G134 coordinates NADP(+). Residues 183–328 (TFKEETETDL…RQIREISLRG (146 aa)) enclose the KARI C-terminal knotted domain. Residues D191, E195, E227, and E231 each contribute to the Mg(2+) site. Residue S252 coordinates substrate.

It belongs to the ketol-acid reductoisomerase family. Mg(2+) is required as a cofactor.

It carries out the reaction (2R)-2,3-dihydroxy-3-methylbutanoate + NADP(+) = (2S)-2-acetolactate + NADPH + H(+). The enzyme catalyses (2R,3R)-2,3-dihydroxy-3-methylpentanoate + NADP(+) = (S)-2-ethyl-2-hydroxy-3-oxobutanoate + NADPH + H(+). Its pathway is amino-acid biosynthesis; L-isoleucine biosynthesis; L-isoleucine from 2-oxobutanoate: step 2/4. It functions in the pathway amino-acid biosynthesis; L-valine biosynthesis; L-valine from pyruvate: step 2/4. Involved in the biosynthesis of branched-chain amino acids (BCAA). Catalyzes an alkyl-migration followed by a ketol-acid reduction of (S)-2-acetolactate (S2AL) to yield (R)-2,3-dihydroxy-isovalerate. In the isomerase reaction, S2AL is rearranged via a Mg-dependent methyl migration to produce 3-hydroxy-3-methyl-2-ketobutyrate (HMKB). In the reductase reaction, this 2-ketoacid undergoes a metal-dependent reduction by NADPH to yield (R)-2,3-dihydroxy-isovalerate. The sequence is that of Ketol-acid reductoisomerase (NADP(+)) from Sulfurisphaera tokodaii (strain DSM 16993 / JCM 10545 / NBRC 100140 / 7) (Sulfolobus tokodaii).